A 239-amino-acid polypeptide reads, in one-letter code: MGKSLIQQRRGKGSPTFKSPSHRFRGAVKYIPLNYTQEKTLRGVVEEIMHDPGRTAPVARVKFENGIEKLIIAPEGLLVGQEIYIGPDAPIAVGNTLPLAKIPEGTYVYNIEGIPGDGGKYVRAGGTYALVVSREPDKVIVQLPSGELKAFNPMCRATIGVVAGGGRLEKPLVKAGKAYYKYKARNKFWPTPRGVKMNAVNHPFGGKEHHPGKPTTTSRRAPPGRKVGHIAARRTGRRK.

2 disordered regions span residues 1-21 (MGKSLIQQRRGKGSPTFKSPS) and 203-239 (PFGGKEHHPGKPTTTSRRAPPGRKVGHIAARRTGRRK). Positions 222 to 239 (PPGRKVGHIAARRTGRRK) are enriched in basic residues.

Belongs to the universal ribosomal protein uL2 family. Part of the 50S ribosomal subunit. Forms a bridge to the 30S subunit in the 70S ribosome.

Functionally, one of the primary rRNA binding proteins. Required for association of the 30S and 50S subunits to form the 70S ribosome, for tRNA binding and peptide bond formation. It has been suggested to have peptidyltransferase activity; this is somewhat controversial. Makes several contacts with the 16S rRNA in the 70S ribosome. The polypeptide is Large ribosomal subunit protein uL2 (Pyrococcus furiosus (strain ATCC 43587 / DSM 3638 / JCM 8422 / Vc1)).